A 462-amino-acid chain; its full sequence is Probable protein phosphatase 2C 1 (462 aa).

A PPM-type phosphatase domain is found at 60-362 (SSCIFTQQGR…DDCAVVCLFL (303 aa)). 4 residues coordinate Mn(2+): Asp95, Gly96, Asp307, and Asp353. 2 disordered regions span residues 369 to 394 (ETSD…QGAE) and 421 to 443 (EADN…LEGV). Residues 376-385 (QCFSSATNAV) are compositionally biased toward polar residues. The segment covering 424-434 (NAEKEKTREGE) has biased composition (basic and acidic residues).

Belongs to the PP2C family. In terms of assembly, interacts with GCN5. It depends on Mg(2+) as a cofactor. Mn(2+) serves as cofactor.

The enzyme catalyses O-phospho-L-seryl-[protein] + H2O = L-seryl-[protein] + phosphate. It carries out the reaction O-phospho-L-threonyl-[protein] + H2O = L-threonyl-[protein] + phosphate. In terms of biological role, may act as negative regulator of GCN5. The chain is Probable protein phosphatase 2C 1 (PPC6-6) from Arabidopsis thaliana (Mouse-ear cress).